A 175-amino-acid chain; its full sequence is NADH-ubiquinone oxidoreductase chain 6 (175 aa).

A run of 5 helical transmembrane segments spans residues Met1–Ser21, Ser25–Met45, Phe47–Val67, Thr88–Leu108, and Tyr149–Leu169.

It belongs to the complex I subunit 6 family. Core subunit of respiratory chain NADH dehydrogenase (Complex I) which is composed of 45 different subunits.

It localises to the mitochondrion inner membrane. The enzyme catalyses a ubiquinone + NADH + 5 H(+)(in) = a ubiquinol + NAD(+) + 4 H(+)(out). Its function is as follows. Core subunit of the mitochondrial membrane respiratory chain NADH dehydrogenase (Complex I) which catalyzes electron transfer from NADH through the respiratory chain, using ubiquinone as an electron acceptor. Essential for the catalytic activity and assembly of complex I. The sequence is that of NADH-ubiquinone oxidoreductase chain 6 (MT-ND6) from Equus asinus (Donkey).